A 76-amino-acid polypeptide reads, in one-letter code: Protein CYSTEINE-RICH TRANSMEMBRANE MODULE 11 (76 aa).

Positions 19-45 (GPPPPVGVPPQYYPPPPPPPPPPPPPR) are disordered. A helical transmembrane segment spans residues 47 to 63 (VGFLEGLLAALCCCCLV).

It belongs to the CYSTM1 family. As to quaternary structure, heterodimers. Interacts with CYSTM6, CYSTM7 and WIH1/CYSTM13. In terms of tissue distribution, mostly expressed in stems, siliques, leaves and flowers and, to a lower extent, in roots.

The protein resides in the cell membrane. Its subcellular location is the cytoplasm. Functionally, involved in resistance to abiotic stress. The sequence is that of Protein CYSTEINE-RICH TRANSMEMBRANE MODULE 11 from Arabidopsis thaliana (Mouse-ear cress).